Here is a 193-residue protein sequence, read N- to C-terminus: Activity-regulated cytoskeleton associated protein 2 (193 aa).

This sequence belongs to the ARC/ARG3.1 family. In terms of assembly, homooligomer; homooligomerizes into virion-like capsids.

Its subcellular location is the extracellular vesicle membrane. Its function is as follows. Self-assembles into virion-like capsids that encapsulate RNAs and mediate intercellular RNA transfer. Arc2 protein is released from cells in extracellular vesicles that mediate the transfer of mRNA into neighboring cells. This Drosophila melanogaster (Fruit fly) protein is Activity-regulated cytoskeleton associated protein 2.